A 184-amino-acid polypeptide reads, in one-letter code: uncharacterized protein (184 aa).

The interval D130–N149 is disordered.

The protein localises to the virion. This is an uncharacterized protein from Acanthamoeba polyphaga (Amoeba).